A 1340-amino-acid polypeptide reads, in one-letter code: MEFQNDFLTNPLRVTLYNPAENEYTKTFIFLGSVPANVLQACRKDLQRTPKDKEILQNFYGEDWEKKLSQYVVGGDSDDLDEFEKLFVEDSGEEANVMMPEIETMYSEYSIFPEDTFKDIREKIYVATGIPPYRQHIFFFQNNALQVTYRLLLSGSGVALDIRDYKKEFQQVGGLNIDASMESQKDELYVEALDSFQLIKNIHHIFVADLNTLVAPMRRQISIAIEDNYQFDLLYYGLIMKYWPLLSPDAFKLLIQSPLQMEKQYPALSPSLTSLKKRLLLEQKLINFTYAKAQQVIAKYEGNRLTRGTLAVTSAMIKISPLVNIQINVRNVFDLFPATPDIPQLVVFFYSKTGPTVVSKHHITSTEPEKFSNKTFRVPTIILIRFINKKAFILTIQNNGHYFIESNWSENERHDFNSVVSTLNNFINPIIHTINDMGPAAFPRGGSLPLPSNEDIQISISSMSVSTFWPYTLSSKGFTELKSRWREYEQAGIISVRGLQQTGVYNFLFKKGIYSYDPHEIERMIIISSGPGRKMDINVALLQNTYAYLFDTNVAARWETIYGGRNIRIYHRVTDIKIEMFNITQEEFNYLWVYLFVFLDNMISGPDKIMVNKLSQLHDKQQGKGASQLRALQEQDPDLYDLRKYDTQATVYSVLCQHPRPPVIYSEAEVKSMPPAKRKELVKYWNFTEGVPAYYSCPHPDYPHLSLLEGRHPLNYCLPCCQKTKALLGTKRFYINNTCLTKHTFVEQDLEDLNTQTSRHTLSYGKKIPVNRIAFLPHQIADELFSNTIKEPDIFCIVGVEQTMLGISNAGLFYSLARILDLAPKALAVEIAKAANTPQYYILGNGAGNMFSSGAELANLILQTFVEQKNQLLQWDTTWQDIFLDLVAICYDLHCVFFKDKQGDIEFEVSPSTIQKILSPSKKIAIIFDTDEGIYPMAMTQQKRFLKNSEAQYIFTEDDPVMEVIHSMSEFMCKDGWWDIHDVKNIPGYTVTKKFINRHNFCYALLIDSGTDRPIYFPIRLSSYIHDDIPIDFDLRPTHIAGFEETWKFISLFNKQYKQYEIIPSAVLQNIKKEFVGFLSEGKTGLYFYYAPTQTLPATLEKLPIATLTMDPRDIDQAILYPLEEPYPQQDKANKAFYINHLYKFLLIEFFDVLYGLQSNTTRKHIEDLFQKTDFQKINSVTEFYTKLSDFVDLNDIHTIKHILETTGAEHALKVLQKNVFNFDYVLLSPLQSYTYDELCQHLKKLLTPRIEFYEDIETIDRGLINIYTSCQYSTLNQPQCEKKRLRIPVNHFENYINILAADILNPLKHSTLLLTGLGVIDDLQFILRPQEIINVKNKF.

The protein localises to the virion. Putative initation factor. The polypeptide is Early transcription factor large subunit homolog (Ornithodoros (relapsing fever ticks)).